Here is a 234-residue protein sequence, read N- to C-terminus: Glucosamine-6-phosphate deaminase (234 aa).

Residue aspartate 63 is the Proton acceptor; for enolization step of the active site. Asparagine 129 serves as the catalytic For ring-opening step. Catalysis depends on histidine 131, which acts as the Proton acceptor; for ring-opening step. The active-site For ring-opening step is glutamate 136.

The protein belongs to the glucosamine/galactosamine-6-phosphate isomerase family. NagB subfamily.

It carries out the reaction alpha-D-glucosamine 6-phosphate + H2O = beta-D-fructose 6-phosphate + NH4(+). The protein operates within amino-sugar metabolism; N-acetylneuraminate degradation; D-fructose 6-phosphate from N-acetylneuraminate: step 5/5. Functionally, catalyzes the reversible isomerization-deamination of glucosamine 6-phosphate (GlcN6P) to form fructose 6-phosphate (Fru6P) and ammonium ion. This chain is Glucosamine-6-phosphate deaminase, found in Listeria monocytogenes serotype 4b (strain CLIP80459).